The primary structure comprises 562 residues: Protein wntless (562 aa).

The Cytoplasmic segment spans residues 1–13 (MSGTILENLSGRK). The helical transmembrane segment at 14–34 (LSILVSSLMLCQVACFLMGGL) threads the bilayer. Over 35-239 (YAPVPAGHQT…AIHQNGGFTQ (205 aa)) the chain is Lumenal. Residues asparagine 58 and asparagine 103 are each glycosylated (N-linked (GlcNAc...) asparagine). The chain crosses the membrane as a helical span at residues 240-260 (VWLLLKTLLFPFVVGIMIWFW). Residues 261–270 (RRVHILQRSP) lie on the Cytoplasmic side of the membrane. Residues 271 to 291 (ALLEYMLLYLGGALSFLNLPL) traverse the membrane as a helical segment. Residues 292 to 311 (EYLTLSIEMPYMLLLSDVRQ) are Lumenal-facing. The chain crosses the membrane as a helical span at residues 312–332 (GIFYAMLLSFWLVFAGEHMLI). At 333–344 (QDTPNKSTIRSR) the chain is on the cytoplasmic side. The helical transmembrane segment at 345-365 (YWKHLSAVVVGCISLFVFDIC) threads the bilayer. Over 366 to 390 (ERGVQLRNPFYSIWTTPLGAKVAMS) the chain is Lumenal. Residues 391 to 411 (FIVLAGVSAAIYFLFLCFMVW) form a helical membrane-spanning segment. Over 412–441 (KVFKDIGDKRTSLPSMSQARRLHYEGLIYR) the chain is Cytoplasmic. The chain crosses the membrane as a helical span at residues 442–462 (FKFLMLATLLCAGLTVAGFIM). The Lumenal portion of the chain corresponds to 463–482 (GQMAEGHWKWNEDIEIQLTS). Residues 483-503 (AFLTGVYGMWNIYIFALIILY) form a helical membrane-spanning segment. Topologically, residues 504–562 (APSHKQWPTMRHSDETTQSNENIVASAASEEIEFSNLPSDSNPSEISSLTSFTRKVAFD) are cytoplasmic.

The protein belongs to the wntless family. Interacts with wg; in the Golgi. Interacts with Vps35, a component of the retromer complex; wls stability is regulated by Vps35.

The protein localises to the presynaptic cell membrane. The protein resides in the postsynaptic cell membrane. It is found in the cell membrane. Its subcellular location is the endoplasmic reticulum membrane. It localises to the endosome membrane. The protein localises to the golgi apparatus membrane. A segment polarity gene required for wingless (wg)-dependent patterning processes, acting in both wg-sending cells and wg-target cells. In non-neuronal cells wls directs wg secretion. The wls traffic loop encompasses the Golgi, the cell surface, an endocytic compartment and a retrograde route leading back to the Golgi, and involves clathrin-mediated endocytosis and the retromer complex (a conserved protein complex consisting of Vps35 and Vps26). In neuronal cells (the larval motorneuron NMJ), the wg signal moves across the synapse via the release of wls-containing exosome-like vesicles. Postsynaptic wls is required for the trafficking of fz2 through the fz2-interacting protein Grip. The chain is Protein wntless from Drosophila virilis (Fruit fly).